The following is a 174-amino-acid chain: Adipose-secreted signaling protein (174 aa).

Ala2 carries the N-acetylalanine modification. Thr147 carries the phosphothreonine modification.

This sequence belongs to the ADISSP family.

It localises to the secreted. Functionally, adipocyte-secreted protein (adipokine) that acts as a key regulator for white adipose tissue (WAT) thermogenesis and glucose homeostasis at least in part through activation of protein kinase A (PKA). This Bos taurus (Bovine) protein is Adipose-secreted signaling protein.